The following is a 1125-amino-acid chain: Transient receptor potential cation channel subfamily A member 1 (1125 aa).

Residues 1 to 721 (MKRSLRRVLR…KWCAYGFRAH (721 aa)) lie on the Cytoplasmic side of the membrane. ANK repeat units lie at residues 63 to 94 (ENLC…ALNV), 98 to 127 (YGNT…NPNL), 131 to 161 (NMMA…NINL), 165 to 194 (NGNT…KLCK), 198 to 227 (WGDY…KTGY), 239 to 268 (KKAS…HIDM), 272 to 301 (AKCM…GSSD), 309 to 338 (NQET…DINS), and 342 to 371 (EGRS…KVDI). 5 disulfide bridges follow: Cys193–Cys666, Cys463–Cys666, Cys609–Cys622, Cys622–Cys666, and Cys634–Cys859. Pro395 carries the 4-hydroxyproline; transient modification. ANK repeat units follow at residues 413–442 (DGCT…SVHS), 446–475 (DKKS…DTRL), 482–511 (HGMT…LFLS), 514–543 (NGWT…KCTD), and 548–577 (EGNT…DILL). (E)-cinnamaldehyde contacts are provided by Cys415 and Cys422. Cys622 provides a ligand contact to (E)-cinnamaldehyde. A Cysteine sulfenic acid (-SOH); transient; in hyperoxia modification is found at Cys634. Positions 642, 666, and 712 each coordinate (E)-cinnamaldehyde. Residues 722–742 (MMNLGSYCLGLIPMTLLVVKI) traverse the membrane as a helical segment. The Extracellular portion of the chain corresponds to 743–767 (QPGMAFNSTGIINETISTHEERINT). Asn749 and Asn755 each carry an N-linked (GlcNAc...) asparagine glycan. Residues 768–788 (LNSFPLKICMILVFLSSIFGY) form a helical membrane-spanning segment. At 789-806 (CKEVVQIFQQKRNYFLDY) the chain is on the cytoplasmic side. Residues Glu791, Gln794, Asn808, and Glu811 each contribute to the Ca(2+) site. A helical transmembrane segment spans residues 807 to 827 (NNALEWVIYTTSMIFVLPLFL). Topologically, residues 828 to 832 (DIPAY) are extracellular. Residues 833 to 853 (MQWQCGAIAIFFYWMNFLLYL) form a helical membrane-spanning segment. Residues 854–876 (QRFENCGIFIVMLEVIFKTLLRS) lie on the Cytoplasmic side of the membrane. Cysteine sulfenic acid (-SOH); transient; in hyperoxia is present on Cys859. A helical transmembrane segment spans residues 877 to 897 (TGVFIFLLLAFGLSFYVLLNF). The Extracellular portion of the chain corresponds to 898 to 904 (QDAFSTP). The pore-forming intramembrane region spans 905-925 (LLSLIQTFSMMLGDINYRDAF). Residues 926 to 937 (LEPLFRNELAYP) are Extracellular-facing. Residues 938–959 (VLTFGQLIAFTMFVPIVLMNLL) form a helical membrane-spanning segment. At 960-1125 (IGLAVGDIAE…THCSISHPDI (166 aa)) the chain is on the cytoplasmic side. Positions 1044–1073 (MEILKQKYRLKDLTSLLEKQHELIKLIIQK) form a coiled coil. 1048 to 1054 (KQKYRLK) contacts a 1,2-diacyl-sn-glycero-3-phospho-(1D-myo-inositol).

Belongs to the transient receptor (TC 1.A.4) family. Homotetramer. Interacts with TMEM100. Interacts with EGLN1. Interacts with the scorpion wasabi receptor toxin at the same site that electrophiles but in a non-covalent manner. Post-translationally, TRPA1 activation by electrophiles occurs though covalent modification of specific cysteine residues in the N-terminal cytoplasmic domain. Hydroxylation is required for TRPA1 activity inhibition in normoxia. In hypoxia, the decrease in oxygen concentration diminishes the activity of the hydroxylase EGLN1, thus relieving TRPA1 from inhibition and ultimately leading to channel activation. In terms of processing, oxidation of Cys-634 and Cys-859 in hyperoxia may override the hydroxylase EGLN1-mediated inhibition, causing TRPA1 activation. In terms of tissue distribution, specifically expressed in a subset of nociceptive neurons. Expressed in dorsal root ganglia.

The protein resides in the cell membrane. It carries out the reaction Ca(2+)(in) = Ca(2+)(out). The catalysed reaction is Mg(2+)(in) = Mg(2+)(out). The enzyme catalyses Na(+)(in) = Na(+)(out). It catalyses the reaction K(+)(in) = K(+)(out). It carries out the reaction Zn(2+)(in) = Zn(2+)(out). Its activity is regulated as follows. Electrophilic ligands activate the channel by covalent modification of intracellular cysteines; Cys-622 plays a key role in covalent binding of electrophiles. Extracellular Ca(2+) both potentiates and inactivates TRPA1; a rapid potentiation follows by slow desensitization. Activated by increase in intracellular Ca(2+) concentration. Inhibited by ruthenium red, a potent blocker of TRPV channels and selectively by A-967079. Activated by benzyl isothiocyanate (BITC), iodoacetamide, sulfhydryl reactive agent MTSEA, N-methyl maleimide (NMM), N-ethylmaleimide (NEM), and 2-aminoethyldiphenylborinate (2-APB). Also activated by hyperoxia. Acivated by intracellular Zn(2+). TRPA1 activation may critically depend on the presence of small intracellular compounds such as polyphosphates. Functionally, ligand-activated Ca(2+)-permeable, nonselective cation channel. Involved in pain detection and possibly also in cold perception, oxygen concentration perception, cough, itch, and inner ear function. Has a relatively high Ca(2+) selectivity, with a preference for divalent over monovalent cations (Ca(2+) &gt; Ba(2+) &gt; Mg(2+) &gt; NH4(+) &gt; Li(+) &gt; K(+)), the influx of cation into the cytoplasm, leads to membrane depolarization. Has a central role in the pain response to endogenous inflammatory mediators, such as bradykinin and to a diverse array of irritants. Activated by a large variety of structurally unrelated electrophilic and non-electrophilic chemical compounds, such as allylthiocyanate (AITC) from mustard oil or wasabi, cinnamaldehyde, diallyl disulfide (DADS) from garlic, and acrolein, an environmental irritant. Electrophilic ligands activate TRPA1 by interacting with critical N-terminal Cys residues in a covalent manner. Non-electrophile agonists bind at distinct sites in the transmembrane domain to promote channel activation. Also acts as an ionotropic cannabinoid receptor by being activated by delta(9)-tetrahydrocannabinol (THC), the psychoactive component of marijuana. May be a component for the mechanosensitive transduction channel of hair cells in inner ear, thereby participating in the perception of sounds. The sequence is that of Transient receptor potential cation channel subfamily A member 1 from Rattus norvegicus (Rat).